Here is a 381-residue protein sequence, read N- to C-terminus: Putrescine N-methyltransferase 3 (381 aa).

Residues 21 to 81 are disordered; the sequence is MNGYQNGTSK…TISHDNGNEL (61 aa). Polar residues-rich tracts occupy residues 23-39 and 46-81; these read GYQN…QNGT and HQNG…GNEL. Residues 92–329 form the PABS domain; that stretch reads PGWFSEFSAL…GVIGYMLCST (238 aa). Residues glutamine 123, glutamate 198, and 229 to 230 each bind S-adenosyl-L-methionine; that span reads DG. The Proton acceptor role is filled by aspartate 248. S-adenosyl-L-methionine is bound at residue tyrosine 317.

This sequence belongs to the class I-like SAM-binding methyltransferase superfamily. Putrescine methyltransferase family. Predominantly expressed in roots.

The enzyme catalyses putrescine + S-adenosyl-L-methionine = N-methylputrescine + S-adenosyl-L-homocysteine + H(+). The protein operates within alkaloid biosynthesis; nicotine biosynthesis. Functionally, involved in the biosynthesis of pyridine alkaloid natural products, leading mainly to the production of anabasine, anatabine, nicotine and nornicotine, effective deterrents against herbivores with antiparasitic and pesticide properties (neurotoxins); nornicotine serves as the precursor in the synthesis of the carcinogen compound N'-nitrosonornicotine (NNN). Methyltransferase that mediates the conversion of putrescine to N-methylputrescine. Promotes leaves ripening. The chain is Putrescine N-methyltransferase 3 from Nicotiana tabacum (Common tobacco).